Reading from the N-terminus, the 156-residue chain is Protein GLUTAMINE DUMPER 4 (156 aa).

At 1–39 the chain is on the extracellular side; sequence MRPLSIKPTSLDVARHATSVESFGNHRPPISPWHSPVPY. Residues 40–60 traverse the membrane as a helical segment; it reads LFGGLAAMLGLIAFALLILAC. Topologically, residues 61–156 are cytoplasmic; that stretch reads SYWRLSTSGD…AKENEETTSQ (96 aa). The tract at residues 67–87 is disordered; the sequence is TSGDDSGERVDEEKESRSGVK. A compositionally biased stretch (basic and acidic residues) spans 72–84; the sequence is SGERVDEEKESRS. Residues 99–103 carry the VIMAG motif; it reads VIMAG. Residues 136-156 form a disordered region; the sequence is AGEEKMGDREKAKENEETTSQ.

It belongs to the GLUTAMINE DUMPER 1 (TC 9.B.60) family. In terms of tissue distribution, expressed in the vascular tissues, even in the minor veins of the leaves.

It localises to the membrane. Probable subunit of an amino acid transporter involved in the regulation of the amino acid metabolism. Stimulates amino acid export by activating nonselective amino acid facilitators. The sequence is that of Protein GLUTAMINE DUMPER 4 (GDU4) from Arabidopsis thaliana (Mouse-ear cress).